Consider the following 648-residue polypeptide: Acetyl-coenzyme A synthetase (648 aa).

CoA-binding positions include 191–194 (RGGR), threonine 310, and asparagine 334. ATP-binding positions include 386-388 (GEP), 410-415 (DTWWQT), aspartate 499, and arginine 514. Serine 522 is a CoA binding site. Arginine 525 is a binding site for ATP. Valine 536, histidine 538, and isoleucine 541 together coordinate Mg(2+). Position 583 (arginine 583) interacts with CoA. Lysine 608 is subject to N6-acetyllysine.

This sequence belongs to the ATP-dependent AMP-binding enzyme family. Mg(2+) serves as cofactor. Post-translationally, acetylated. Deacetylation by the SIR2-homolog deacetylase activates the enzyme.

The catalysed reaction is acetate + ATP + CoA = acetyl-CoA + AMP + diphosphate. In terms of biological role, catalyzes the conversion of acetate into acetyl-CoA (AcCoA), an essential intermediate at the junction of anabolic and catabolic pathways. AcsA undergoes a two-step reaction. In the first half reaction, AcsA combines acetate with ATP to form acetyl-adenylate (AcAMP) intermediate. In the second half reaction, it can then transfer the acetyl group from AcAMP to the sulfhydryl group of CoA, forming the product AcCoA. The sequence is that of Acetyl-coenzyme A synthetase from Aeromonas hydrophila subsp. hydrophila (strain ATCC 7966 / DSM 30187 / BCRC 13018 / CCUG 14551 / JCM 1027 / KCTC 2358 / NCIMB 9240 / NCTC 8049).